The following is a 258-amino-acid chain: ADP-dependent (S)-NAD(P)H-hydrate dehydratase (258 aa).

One can recognise a YjeF C-terminal domain in the interval 1 to 258 (MGRLQRTLSN…VIECIPKTIR (258 aa)). G201 provides a ligand contact to AMP. Residue D202 coordinates (6S)-NADPHX.

The protein belongs to the NnrD/CARKD family. In terms of assembly, homotetramer. Mg(2+) is required as a cofactor.

It catalyses the reaction (6S)-NADHX + ADP = AMP + phosphate + NADH + H(+). It carries out the reaction (6S)-NADPHX + ADP = AMP + phosphate + NADPH + H(+). In terms of biological role, catalyzes the dehydration of the S-form of NAD(P)HX at the expense of ADP, which is converted to AMP. Together with NAD(P)HX epimerase, which catalyzes the epimerization of the S- and R-forms, the enzyme allows the repair of both epimers of NAD(P)HX, a damaged form of NAD(P)H that is a result of enzymatic or heat-dependent hydration. This Natrialba magadii (strain ATCC 43099 / DSM 3394 / CCM 3739 / CIP 104546 / IAM 13178 / JCM 8861 / NBRC 102185 / NCIMB 2190 / MS3) (Natronobacterium magadii) protein is ADP-dependent (S)-NAD(P)H-hydrate dehydratase.